The sequence spans 307 residues: Protoheme IX farnesyltransferase (307 aa).

9 helical membrane passes run 28 to 48, 50 to 70, 100 to 120, 122 to 142, 149 to 169, 176 to 196, 218 to 238, 243 to 263, and 282 to 302; these read VTQL…PGMV, WPVL…AFAI, ILLF…VFAN, LTMW…TLLL, NIVI…AAVA, AWIL…ALAL, FTLL…ILPF, SGYL…VHAW, and IVYL…KFGP.

This sequence belongs to the UbiA prenyltransferase family. Protoheme IX farnesyltransferase subfamily.

Its subcellular location is the cell inner membrane. It catalyses the reaction heme b + (2E,6E)-farnesyl diphosphate + H2O = Fe(II)-heme o + diphosphate. Its pathway is porphyrin-containing compound metabolism; heme O biosynthesis; heme O from protoheme: step 1/1. Converts heme B (protoheme IX) to heme O by substitution of the vinyl group on carbon 2 of heme B porphyrin ring with a hydroxyethyl farnesyl side group. This Ralstonia nicotianae (strain ATCC BAA-1114 / GMI1000) (Ralstonia solanacearum) protein is Protoheme IX farnesyltransferase.